A 615-amino-acid chain; its full sequence is Mitochondrial distribution and morphology protein 34 (615 aa).

Residues 1–195 (MAFNFNWSPL…LPAIIHRLSL (195 aa)) enclose the SMP-LTD domain. Disordered stretches follow at residues 293 to 313 (SDKPDATATPASTPNLHRTSS), 346 to 566 (ATTG…PQPD), and 596 to 615 (PAFWEDSHQHDIPPPAYEPR). Polar residues predominate over residues 301 to 313 (TPASTPNLHRTSS). The segment covering 346-355 (ATTGLSLGSG) has biased composition (low complexity). Over residues 356–367 (RHSKAGRKKKMR) the composition is skewed to basic residues. 3 stretches are compositionally biased toward polar residues: residues 384 to 403 (IGSTSSQAGDSHTEASTRTP), 435 to 446 (DATTSARASESS), and 457 to 499 (VTAQ…YSSR). Positions 517–557 (QQQQFQQQQQQQQQQQQQQQQQQQQQQQQQQQQQQQQQQQQ) are enriched in low complexity. Residues 596 to 606 (PAFWEDSHQHD) show a composition bias toward basic and acidic residues.

The protein belongs to the MDM34 family. As to quaternary structure, component of the ER-mitochondria encounter structure (ERMES) or MDM complex, composed of mmm-1, mdm10, mdm12 and mdm34.

Its subcellular location is the mitochondrion outer membrane. Its function is as follows. Component of the ERMES/MDM complex, which serves as a molecular tether to connect the endoplasmic reticulum (ER) and mitochondria. Components of this complex are involved in the control of mitochondrial shape and protein biogenesis, and function in nonvesicular lipid trafficking between the ER and mitochondria. Mdm34 is required for the interaction of the ER-resident membrane protein mmm-1 and the outer mitochondrial membrane-resident beta-barrel protein mdm10. This chain is Mitochondrial distribution and morphology protein 34, found in Neurospora crassa (strain ATCC 24698 / 74-OR23-1A / CBS 708.71 / DSM 1257 / FGSC 987).